The following is a 553-amino-acid chain: CTP synthase (553 aa).

Residues 1-277 (MPTEPETDYD…DQYVMEELDI (277 aa)) form an amidoligase domain region. Ser26 provides a ligand contact to CTP. Ser26 contacts UTP. ATP-binding positions include 27-32 (GLGKGI) and Asp84. Asp84 and Glu152 together coordinate Mg(2+). Residues 159–161 (DIE), 198–203 (KTKPTQ), and Lys234 contribute to the CTP site. UTP-binding positions include 198 to 203 (KTKPTQ) and Lys234. One can recognise a Glutamine amidotransferase type-1 domain in the interval 307 to 544 (LVGKYDLEDA…LEAVLGDDPH (238 aa)). Residue Gly364 coordinates L-glutamine. The active-site Nucleophile; for glutamine hydrolysis is Cys391. Residues 392–395 (LGFQ), Glu415, and Arg472 each bind L-glutamine. Active-site residues include His517 and Glu519.

The protein belongs to the CTP synthase family. Homotetramer.

The enzyme catalyses UTP + L-glutamine + ATP + H2O = CTP + L-glutamate + ADP + phosphate + 2 H(+). It catalyses the reaction L-glutamine + H2O = L-glutamate + NH4(+). It carries out the reaction UTP + NH4(+) + ATP = CTP + ADP + phosphate + 2 H(+). The protein operates within pyrimidine metabolism; CTP biosynthesis via de novo pathway; CTP from UDP: step 2/2. Its activity is regulated as follows. Allosterically activated by GTP, when glutamine is the substrate; GTP has no effect on the reaction when ammonia is the substrate. The allosteric effector GTP functions by stabilizing the protein conformation that binds the tetrahedral intermediate(s) formed during glutamine hydrolysis. Inhibited by the product CTP, via allosteric rather than competitive inhibition. Its function is as follows. Catalyzes the ATP-dependent amination of UTP to CTP with either L-glutamine or ammonia as the source of nitrogen. Regulates intracellular CTP levels through interactions with the four ribonucleotide triphosphates. This chain is CTP synthase, found in Haloarcula marismortui (strain ATCC 43049 / DSM 3752 / JCM 8966 / VKM B-1809) (Halobacterium marismortui).